Here is a 122-residue protein sequence, read N- to C-terminus: MIYGTGIDITDLKRVQRVVERQPRFLTKVLTPNERVDYQKLSGQRALEFIAGRWSAKESYSKAMGTGIGATVTFQDIEIRDNDAGRPVVRRQPFGGIAHVSISHTETVVMTQVILERGNESW.

Positions 8 and 58 each coordinate Mg(2+).

The protein belongs to the P-Pant transferase superfamily. AcpS family. Mg(2+) serves as cofactor.

Its subcellular location is the cytoplasm. The catalysed reaction is apo-[ACP] + CoA = holo-[ACP] + adenosine 3',5'-bisphosphate + H(+). Transfers the 4'-phosphopantetheine moiety from coenzyme A to a Ser of acyl-carrier-protein. In Levilactobacillus brevis (strain ATCC 367 / BCRC 12310 / CIP 105137 / JCM 1170 / LMG 11437 / NCIMB 947 / NCTC 947) (Lactobacillus brevis), this protein is Holo-[acyl-carrier-protein] synthase.